Here is a 562-residue protein sequence, read N- to C-terminus: Sulfite reductase [NADPH] hemoprotein beta-component (562 aa).

Residues cysteine 428, cysteine 434, cysteine 473, and cysteine 477 each coordinate [4Fe-4S] cluster. Cysteine 477 lines the siroheme pocket.

Belongs to the nitrite and sulfite reductase 4Fe-4S domain family. In terms of assembly, alpha(8)-beta(8). The alpha component is a flavoprotein, the beta component is a hemoprotein. The cofactor is siroheme. [4Fe-4S] cluster is required as a cofactor.

It catalyses the reaction hydrogen sulfide + 3 NADP(+) + 3 H2O = sulfite + 3 NADPH + 4 H(+). It participates in sulfur metabolism; hydrogen sulfide biosynthesis; hydrogen sulfide from sulfite (NADPH route): step 1/1. In terms of biological role, component of the sulfite reductase complex that catalyzes the 6-electron reduction of sulfite to sulfide. This is one of several activities required for the biosynthesis of L-cysteine from sulfate. This Myxococcus xanthus (strain DK1622) protein is Sulfite reductase [NADPH] hemoprotein beta-component.